A 358-amino-acid polypeptide reads, in one-letter code: Flap endonuclease 1 (358 aa).

An N-domain region spans residues 1–103; the sequence is MGIKRLSKLI…HEFEKRTKRR (103 aa). D34 provides a ligand contact to Mg(2+). Residues R47 and R69 each coordinate DNA. Residues D85, E157, E159, D178, and D180 each coordinate Mg(2+). The I-domain stretch occupies residues 121 to 252; the sequence is LVSKYDRMNV…KRAFEYIKKY (132 aa). E157 provides a ligand contact to DNA. DNA contacts are provided by G230 and D232. Residue D232 participates in Mg(2+) binding. The segment at 346-354 is interaction with PCNA; sequence KQTRIDSFF.

It belongs to the XPG/RAD2 endonuclease family. FEN1 subfamily. As to quaternary structure, interacts with PCNA. Three molecules of FEN1 bind to one PCNA trimer with each molecule binding to one PCNA monomer. PCNA stimulates the nuclease activity without altering cleavage specificity. Mg(2+) is required as a cofactor. Post-translationally, phosphorylated. Phosphorylation upon DNA damage induces relocalization to the nuclear plasma.

The protein localises to the nucleus. Its subcellular location is the nucleolus. It localises to the nucleoplasm. The protein resides in the mitochondrion. Structure-specific nuclease with 5'-flap endonuclease and 5'-3' exonuclease activities involved in DNA replication and repair. During DNA replication, cleaves the 5'-overhanging flap structure that is generated by displacement synthesis when DNA polymerase encounters the 5'-end of a downstream Okazaki fragment. It enters the flap from the 5'-end and then tracks to cleave the flap base, leaving a nick for ligation. Also involved in the long patch base excision repair (LP-BER) pathway, by cleaving within the apurinic/apyrimidinic (AP) site-terminated flap. Acts as a genome stabilization factor that prevents flaps from equilibrating into structures that lead to duplications and deletions. Also possesses 5'-3' exonuclease activity on nicked or gapped double-stranded DNA, and exhibits RNase H activity. Also involved in replication and repair of rDNA and in repairing mitochondrial DNA. The sequence is that of Flap endonuclease 1 from Enterocytozoon bieneusi (strain H348) (Microsporidian parasite).